A 166-amino-acid polypeptide reads, in one-letter code: Protein SprT (166 aa).

In terms of domain architecture, SprT-like spans Ala-21–Phe-160. His-74 contacts Zn(2+). Glu-75 is an active-site residue. His-78 contacts Zn(2+).

Belongs to the SprT family. Requires Zn(2+) as cofactor.

Its subcellular location is the cytoplasm. The protein is Protein SprT of Vibrio atlanticus (strain LGP32) (Vibrio splendidus (strain Mel32)).